The primary structure comprises 254 residues: Myeloblastin (254 aa).

The first 27 residues, Met1–Ala27, serve as a signal peptide directing secretion. A propeptide spanning residues Ser28–Lys29 is cleaved from the precursor. Residues Ile30 to Arg250 form the Peptidase S1 domain. A disulfide bridge links Cys58 with Cys74. Residues His73 and Asp120 each act as charge relay system in the active site. Residues Asn127 and Asn176 are each glycosylated (N-linked (GlcNAc...) asparagine). Disulfide bonds link Cys154–Cys211, Cys184–Cys190, and Cys201–Cys226. Ser205 acts as the Charge relay system in catalysis. The propeptide occupies Gly251–Pro254.

This sequence belongs to the peptidase S1 family. Elastase subfamily. May form dimers. Interacts with CD177; the interaction tethers PRTN3 to the cell surface; the interaction is direct. Interacts with SERPINB1. Interacts with ADGRG3.

The protein resides in the lysosome. It localises to the secreted. Its subcellular location is the cell membrane. It is found in the membrane raft. The enzyme catalyses Hydrolysis of proteins, including elastin, by preferential cleavage: -Ala-|-Xaa- &gt; -Val-|-Xaa-.. In terms of biological role, serine protease that degrades elastin, fibronectin, laminin, vitronectin, and collagen types I, III, and IV (in vitro). By cleaving and activating receptor F2RL1/PAR-2, enhances endothelial cell barrier function and thus vascular integrity during neutrophil transendothelial migration. May play a role in neutrophil transendothelial migration, probably when associated with CD177. Triggers inflammatory processes in neutrophils by interacting with ADGRG3 upstream of F2RL1/PAR2 activation. The sequence is that of Myeloblastin (Prtn3) from Mus musculus (Mouse).